Here is a 2288-residue protein sequence, read N- to C-terminus: MKGHQFKSWIFELREILKEIKNSRYFLDSWTQFNSAGFLIHIFFHQESFIKLLDSRIWSILLSRNSQGSTSNRYFTIKYVVLFVVAVLIYRINNRKMVERKNPYLTRLLPIPMNSIGPKNDTLEESSESSNINRLIVPLLYLPKGKKISESSFLDPKESTRVLPITKKYIMPEFNWGSRWWRNWIGKKSYSSCKISNETIAGIEISFKEKDIKYLEFLFVYYMDDPIRKDHDWEFFDRLSPRKRRNIINLNSGQLFEILVKDWIYYLMFAFREKIPKEVEGFFKQQGTGSIIQSNDIEHVSHLFLRNKRAISLQNCAQFHMWQFRQDLFVSWGKSPHESDFLRNMSQENWIWLDNVWLGNKDRFFSKVRNVSSNLQYDSTRSSFIQVTDSSQLKGSSDQSKDSFDSIRNEDSKYHTLINQREIQQLKERSILCWDPSFLQTERTEIESERFLKNLSGYSSMCRLFMEREKQMNNHLLPEEIEEFLGNPARATRSFFSDRWSELHLGSNPTDRSTRDQKLLKKEQKKHLALSRRSEKKEIVNLFKIIMYLQNTVSIHPISSYRGCDMVPKDELDSSNKISFLNKNPFWGFFHLFHDRNRGRYTLHHDFESEDLFQEMADLFTLSITEPDLVYHKEFDFSIDSSGLDQKHFLNELLNSRDESKKHSLLVLPPLFYEQNESFYRRIIKKWVQTSCGNNLEDPKPKIVVFASNNIMEAVNQYRLIRNLIQIQYSTHVYIRNVLNRFNCNFEYGIQRYQIGNDTLNHRTRMKYTINQHFSNLKKSQKKWFDPLILISRTERSMNWDPNAYRYKWSNGSKNFQEHLDYFISEQNSLQVVFDRLHINQYSIDWSEVIDKKDLSKSLCLFLSKLLLFLPKFLLFLSNSLPSFFFVSFGGISIHRSEIHIYELKGPNDPLCNQLLESIGLQIFHLKKRKPLLLDDQDTSQKSKFLINGGTISPFLFNKIPKWMIDSFHTRKNRRKSFDNTDSYFSMISHDPDNWLNPVKPFHRSSLIYYFYKANQLRFLNNQYHFCFYCNKRFPFYVEKARINNYDFTYGQFLKILFIRNKIFSFCDGQKKHAFLKRDTISPIELQVSNILIPNDFPQSGDEGYNFYKSFHFPIRYDPFVRGAIYSIADISGTPLTEGQIVHFEKTYCQPLSDMNIPDSEGKNLYQYLNFNSNMGWIHTPCSEKYLPSEKRKKRSSCLQKCLEKGQMYRTFQQDSVFSTLSKWNLFQTYIPWFLTSTGYKYLNFIFLDTFSDLLPILSSSQKFVSIFHDIMHGSDILWRIRQIPLCLPQWNLISEIPGNCFHNLLLSEEMTHRNNELLLISTHLRSLNVQEFFYSILFLLLVAGYLVRTHLLFVSRVYSELQTEFEKVKSLMIPSYMIELRKLLDRYPTSELNSFWLKNLFLVALEQLGDSLEEIRSFAFGGNMLWGGGPAYGVKSIRSKNKSWNLIDLISIIPNPINRIAFSRNTRHLSHPSKAIYSLIRKIKNVNGDWIDDQIESWVSNTDSIDDKEKEFLVQFSTLTTEKRIDQILLSLTHSDLLSKNNSGYQISEQPGAIYLRYLVDIHKKYLMIYEFNTSCLVERHIFLANYQTITYSQTLWGANSFHFPSHGKPFSLRLALPPPSRGILVIGSIGTGRSYLVKYLAKNSYVPFITVFLNKFLDNKPKGFLIDDSDDIDDSDDSDDIDRDLDIELELLTMMNTLTMDMMPEIDRFYITFHFELAKAMSPCIIWIPNIHDLDVNESNYLSLGLLVNYLSRDCERCSTRNILVIASTHIPQKVDPALIAPNQFNTCIKIRRLLIPQQRKHFFTLSYTRGFHLEKKMSHTNGFGSTTMGSNVRDLVALNNEALSISIIQKKSIIDTNIISSVLHRQTWDFRSQVRSVQDHGILFYQIGRAVSQNVLLSNCSIDPISIYMKKKSCDGGDSYLYKWYFELGTSMKKLTILLYLLSCSAGSVAQDLWSLPGPDEKNGITSYGLVENNSDLVHGLLEVEGALVGSSRTEKDCSQFDKDRVTLLLRSEPRNPLNRIQNGSYSIVDQRFLYEKYESEFEERGGVLDPQQIEEDFFNHIVWAPRIWRPWGFLFDCIERPNSLGFPYWARSFRDKRIIYDEEDELQENDSEFLQGGTMQYQTRDRSSKEQGFFRISQFIWDPADPLFFLFKDQPFVSVFSHRQFFTDEEMSRELLTSQTDLPTSIYKHWFIKNTQEKHFELLIHCQRWLRINSSSSKGFFPSNTLSESYQYLSNLFLSNEALLDQMTKTLLRKRWLFPDEIVVAICSNNESLVSLNHSKKKNR.

ATP is bound at residue 1629-1636 (GSIGTGRS).

The protein belongs to the Ycf2 family.

It is found in the plastid. It localises to the chloroplast stroma. In terms of biological role, probable ATPase of unknown function. Its presence in a non-photosynthetic plant (Epifagus virginiana) and experiments in tobacco indicate that it has an essential function which is probably not related to photosynthesis. The polypeptide is Protein Ycf2 (Phaseolus vulgaris (Kidney bean)).